The sequence spans 264 residues: Apolipoprotein A-I (264 aa).

The signal sequence occupies residues 1–18; that stretch reads MKAVVLAVALVFLTGSQA. Repeat copies occupy residues 67–88 and 89–110. The 10 X approximate tandem repeats stretch occupies residues 67–264; it reads LNLLENWDTL…DKASETLTAQ (198 aa). Met-109 is modified (methionine sulfoxide). One copy of the 3; half-length repeat lies at 111 to 121; the sequence is KDLEEVKQKVQ. Tandem repeats lie at residues 122 to 143, 144 to 165, and 166 to 187. The stretch at 188-207 is one 7; truncated repeat; the sequence is PHSEQMRESLAQRLAELKSN. A Methionine sulfoxide modification is found at Met-193. Repeat unit 8 spans residues 208–229; the sequence is PTLNEYHTRAKTHLKTLGEKAR. The 9; half-length repeat unit spans residues 230-240; that stretch reads PALEDLRHSLM. Methionine sulfoxide occurs at positions 240 and 242. Residues 241–264 form repeat 10; it reads PMLETLKTQVQSVIDKASETLTAQ.

Belongs to the apolipoprotein A1/A4/E family. In terms of assembly, homodimer. Interacts with APOA1BP and CLU. Component of a sperm activating protein complex (SPAP), consisting of APOA1, an immunoglobulin heavy chain, an immunoglobulin light chain and albumin. Interacts with NDRG1. Interacts with SCGB3A2. Interacts with NAXE and YJEFN3. In terms of processing, glycosylated. Palmitoylated. Post-translationally, may be acylated. In terms of processing, phosphorylation sites are present in the extracellular medium. In terms of tissue distribution, major protein of plasma HDL, also found in chylomicrons.

The protein resides in the secreted. Functionally, participates in the reverse transport of cholesterol from tissues to the liver for excretion by promoting cholesterol efflux from tissues and by acting as a cofactor for the lecithin cholesterol acyltransferase (LCAT). As part of the SPAP complex, activates spermatozoa motility. The polypeptide is Apolipoprotein A-I (Apoa1) (Mus musculus (Mouse)).